The chain runs to 397 residues: Chalcone synthase 2 (397 aa).

Residue Cys168 is part of the active site.

It belongs to the thiolase-like superfamily. Chalcone/stilbene synthases family.

It catalyses the reaction (E)-4-coumaroyl-CoA + 3 malonyl-CoA + 3 H(+) = 2',4,4',6'-tetrahydroxychalcone + 3 CO2 + 4 CoA. It participates in secondary metabolite biosynthesis; flavonoid biosynthesis. Its function is as follows. The primary product of this enzyme is 4,2',4',6'-tetrahydroxychalcone (also termed naringenin-chalcone or chalcone) which can under specific conditions spontaneously isomerize into naringenin. This chain is Chalcone synthase 2 (CHS2), found in Daucus carota (Wild carrot).